Here is a 208-residue protein sequence, read N- to C-terminus: ATP-dependent Clp protease proteolytic subunit (208 aa).

The Nucleophile role is filled by serine 106. Residue histidine 131 is part of the active site.

The protein belongs to the peptidase S14 family. Fourteen ClpP subunits assemble into 2 heptameric rings which stack back to back to give a disk-like structure with a central cavity, resembling the structure of eukaryotic proteasomes.

The protein localises to the cytoplasm. It catalyses the reaction Hydrolysis of proteins to small peptides in the presence of ATP and magnesium. alpha-casein is the usual test substrate. In the absence of ATP, only oligopeptides shorter than five residues are hydrolyzed (such as succinyl-Leu-Tyr-|-NHMec, and Leu-Tyr-Leu-|-Tyr-Trp, in which cleavage of the -Tyr-|-Leu- and -Tyr-|-Trp bonds also occurs).. Functionally, cleaves peptides in various proteins in a process that requires ATP hydrolysis. Has a chymotrypsin-like activity. Plays a major role in the degradation of misfolded proteins. The polypeptide is ATP-dependent Clp protease proteolytic subunit (Caulobacter sp. (strain K31)).